A 444-amino-acid chain; its full sequence is Ribosomal protein uS12 methylthiotransferase RimO (444 aa).

The region spanning 3 to 119 (IKIGLVSLGC…IARAVRRVLE (117 aa)) is the MTTase N-terminal domain. [4Fe-4S] cluster-binding residues include cysteine 12, cysteine 48, cysteine 82, cysteine 156, cysteine 160, and cysteine 163. Residues 142–372 (ATPPYTAYLK…MMLQQEISLQ (231 aa)) enclose the Radical SAM core domain. One can recognise a TRAM domain in the interval 375–444 (LKRVGEVIEV…EYDLTGETVL (70 aa)).

The protein belongs to the methylthiotransferase family. RimO subfamily. The cofactor is [4Fe-4S] cluster.

The protein localises to the cytoplasm. The enzyme catalyses L-aspartate(89)-[ribosomal protein uS12]-hydrogen + (sulfur carrier)-SH + AH2 + 2 S-adenosyl-L-methionine = 3-methylsulfanyl-L-aspartate(89)-[ribosomal protein uS12]-hydrogen + (sulfur carrier)-H + 5'-deoxyadenosine + L-methionine + A + S-adenosyl-L-homocysteine + 2 H(+). Catalyzes the methylthiolation of an aspartic acid residue of ribosomal protein uS12. The polypeptide is Ribosomal protein uS12 methylthiotransferase RimO (Pelotomaculum thermopropionicum (strain DSM 13744 / JCM 10971 / SI)).